The following is a 397-amino-acid chain: Pectate lyase 4 (397 aa).

The N-terminal stretch at 1 to 25 (MGIKHCCYILYFTLALVTLVQAGRL) is a signal peptide. Residue N36 is glycosylated (N-linked (GlcNAc...) asparagine). A disulfide bridge links C54 with C71. 3 PbH1 repeats span residues 159–202 (VKNV…HVTG), 203–224 (SSDIWIDHCTLSKSFDGLVDVN), and 227–248 (STGVTISNCKFTHHEKAVLLGA). Ca(2+) contacts are provided by D194, D218, and D222. R274 is an active-site residue.

The protein belongs to the polysaccharide lyase 1 family. Amb a subfamily. In terms of assembly, monomer. It depends on Ca(2+) as a cofactor. The N-terminus is blocked. In terms of tissue distribution, pollen and flowers.

It carries out the reaction Eliminative cleavage of (1-&gt;4)-alpha-D-galacturonan to give oligosaccharides with 4-deoxy-alpha-D-galact-4-enuronosyl groups at their non-reducing ends.. The protein operates within glycan metabolism; pectin degradation; 2-dehydro-3-deoxy-D-gluconate from pectin: step 2/5. In terms of biological role, has pectate lyase activity. The sequence is that of Pectate lyase 4 from Ambrosia artemisiifolia (Common ragweed).